Reading from the N-terminus, the 474-residue chain is Methylenetetrahydrofolate--tRNA-(uracil-5-)-methyltransferase TrmFO (474 aa).

Residue 9–14 participates in FAD binding; the sequence is GGGLAG. Residues 425–451 form a disordered region; it reads PPLERMPRNETGKRLRGPEKAALKKRA. Residues 429-451 show a composition bias toward basic and acidic residues; sequence RMPRNETGKRLRGPEKAALKKRA.

The protein belongs to the MnmG family. TrmFO subfamily. It depends on FAD as a cofactor.

The protein localises to the cytoplasm. It catalyses the reaction uridine(54) in tRNA + (6R)-5,10-methylene-5,6,7,8-tetrahydrofolate + NADH + H(+) = 5-methyluridine(54) in tRNA + (6S)-5,6,7,8-tetrahydrofolate + NAD(+). It carries out the reaction uridine(54) in tRNA + (6R)-5,10-methylene-5,6,7,8-tetrahydrofolate + NADPH + H(+) = 5-methyluridine(54) in tRNA + (6S)-5,6,7,8-tetrahydrofolate + NADP(+). Functionally, catalyzes the folate-dependent formation of 5-methyl-uridine at position 54 (M-5-U54) in all tRNAs. This is Methylenetetrahydrofolate--tRNA-(uracil-5-)-methyltransferase TrmFO from Methylorubrum populi (strain ATCC BAA-705 / NCIMB 13946 / BJ001) (Methylobacterium populi).